We begin with the raw amino-acid sequence, 567 residues long: MFS-type transporter poxA (567 aa).

Basic and acidic residues predominate over residues 1-23 (MPASDRTSETGDVEKVTAAETPK). The tract at residues 1–24 (MPASDRTSETGDVEKVTAAETPKE) is disordered. Helical transmembrane passes span 35-55 (ALTG…LFLG), 77-97 (ADIG…QLLA), 108-128 (LVFL…GVAV), 141-161 (GAGA…VVPL), 165-185 (SLIL…GPVI), 197-217 (WCFY…ILFF), 240-260 (LAGC…LQWG), 271-291 (SATI…FLIW), 311-331 (IIAS…VGYF), and 349-369 (VMLL…GVIV). N370 carries N-linked (GlcNAc...) asparagine glycosylation. Transmembrane regions (helical) follow at residues 372 to 392 (TGYF…GSGL), 410 to 430 (ILQG…QVAL), 436 to 456 (LIPV…SIML), and 515 to 535 (AIAG…LVSF). Residues 547-567 (EENKKEAAEEEEEVKVAAVEA) are disordered.

It belongs to the major facilitator superfamily. TCR/Tet family.

The protein resides in the cell membrane. Its function is as follows. MFS-type transporter; part of the gene cluster that mediates the biosynthesis of oxaleimides, cytotoxic compounds containing an unusual disubstituted succinimide moiety. In Penicillium oxalicum (strain 114-2 / CGMCC 5302) (Penicillium decumbens), this protein is MFS-type transporter poxA.